The sequence spans 70 residues: Probable protein transport protein Sec61 subunit gamma (70 aa).

The Cytoplasmic portion of the chain corresponds to 1-33 (MADNADDLFQIPKNFYKEGSHFIKRCVKPDRKE). Residues 34 to 62 (FLSISKAVATGFVLMGLIGYIIKLIHIPI) form a helical membrane-spanning segment. At 63–70 (NKVLVGGA) the chain is on the extracellular side.

It belongs to the SecE/SEC61-gamma family. In terms of assembly, heterotrimeric complex composed of SEC61-alpha, SEC61-beta and SEC61-gamma.

Its subcellular location is the endoplasmic reticulum membrane. In terms of biological role, necessary for protein translocation in the endoplasmic reticulum. The polypeptide is Probable protein transport protein Sec61 subunit gamma (sss1) (Schizosaccharomyces pombe (strain 972 / ATCC 24843) (Fission yeast)).